Reading from the N-terminus, the 492-residue chain is Nuclear hormone receptor family member nhr-4 (492 aa).

The segment at residues 47-122 (RLICDVCGDV…VGMNPDSVQN (76 aa)) is a DNA-binding region (nuclear receptor). 2 NR C4-type zinc fingers span residues 50-70 (CDVC…CNGC) and 86-110 (CRFG…LKKC). A disordered region spans residues 121-143 (QNERDRNAKNGGMGGPMSSPTQS). One can recognise an NR LBD domain in the interval 215–481 (MDFSIHSAVL…ELIQATHKTT (267 aa)).

The protein belongs to the nuclear hormone receptor family.

The protein resides in the nucleus. In terms of biological role, orphan nuclear receptor. The protein is Nuclear hormone receptor family member nhr-4 (nhr-4) of Caenorhabditis elegans.